The sequence spans 81 residues: uncharacterized protein (81 aa).

Residues 1–24 (MRKILKIVSLLILLLLLVYSFFSP) form the signal peptide. Residues 25–28 (NSQL) lie on the Extracellular side of the membrane. Residues 29-49 (FVFVQLIIIAFLIGFGINCFV) traverse the membrane as a helical segment. At 50-81 (KKERYQGTLYFVIAICNITINLDKINELIQSI) the chain is on the cytoplasmic side.

Its subcellular location is the cell membrane. This is an uncharacterized protein from Bacillus subtilis (strain 168).